Reading from the N-terminus, the 146-residue chain is uncharacterized protein (146 aa).

The segment covering 119–128 has biased composition (basic and acidic residues); it reads AQADLEHEES. The segment at 119 to 146 is disordered; it reads AQADLEHEESASIDQDEMVAIETRKTKK.

This is an uncharacterized protein from Schizosaccharomyces pombe (strain 972 / ATCC 24843) (Fission yeast).